Consider the following 445-residue polypeptide: MTFQNKKILVAGLGGTGISMIAYLRKNGVEVAAYDAELKPERVAQIGKMFDGLVFYTGRLKDALDNGFDILALSPGISERQPDIEAFKQNGGRVLGDIELLADIVNRRGDKVIAITGSNGKTTVTSLVGYLCIKCGLDTVIAGNIGTPVLEAEWQREGKKADVWVLELSSFQLENTESLRPTAATVLNISEDHLDRYDDLLDYAHTKDKIFRGDGVQVLNADDAFCRAMKRAGREVKWFSLEYEADFWLERETGRLKQGNEDLIATQDIPLQGLHNATNVMAAVALCEAVGLPREALLEHVKTFQGLPHRVEKIGEKNGVVFIDDSKGTNVGATAAAIAGLQNPLFVILGGMGKGQDFTPLRDALAGKAKGVFLIGVDALQIRRDLDGCDLNMTDCATLEEAVQKAYAQAEAGDIVLLSPACASFDMFKGYAHRSEVFIGAFKAL.

117 to 123 (GSNGKTT) is an ATP binding site.

It belongs to the MurCDEF family.

The protein resides in the cytoplasm. The catalysed reaction is UDP-N-acetyl-alpha-D-muramoyl-L-alanine + D-glutamate + ATP = UDP-N-acetyl-alpha-D-muramoyl-L-alanyl-D-glutamate + ADP + phosphate + H(+). It functions in the pathway cell wall biogenesis; peptidoglycan biosynthesis. Functionally, cell wall formation. Catalyzes the addition of glutamate to the nucleotide precursor UDP-N-acetylmuramoyl-L-alanine (UMA). The sequence is that of UDP-N-acetylmuramoylalanine--D-glutamate ligase from Neisseria meningitidis serogroup C (strain 053442).